The chain runs to 328 residues: Phosphate acyltransferase (328 aa).

The protein belongs to the PlsX family. As to quaternary structure, homodimer. Probably interacts with PlsY.

Its subcellular location is the cytoplasm. The catalysed reaction is a fatty acyl-[ACP] + phosphate = an acyl phosphate + holo-[ACP]. It functions in the pathway lipid metabolism; phospholipid metabolism. Functionally, catalyzes the reversible formation of acyl-phosphate (acyl-PO(4)) from acyl-[acyl-carrier-protein] (acyl-ACP). This enzyme utilizes acyl-ACP as fatty acyl donor, but not acyl-CoA. This Staphylococcus aureus (strain MRSA252) protein is Phosphate acyltransferase.